The following is a 126-amino-acid chain: Protein ApaG (126 aa).

The region spanning 2–126 (SDTQHQVNVR…FRLAVPGALH (125 aa)) is the ApaG domain.

The chain is Protein ApaG from Pseudomonas aeruginosa (strain LESB58).